We begin with the raw amino-acid sequence, 345 residues long: Methylthioribose-1-phosphate isomerase (345 aa).

Residues 44–46, Arg-87, and Gln-194 each bind substrate; that span reads RGA. Asp-235 functions as the Proton donor in the catalytic mechanism. A substrate-binding site is contributed by 245 to 246; it reads NK.

Belongs to the eIF-2B alpha/beta/delta subunits family. MtnA subfamily.

The enzyme catalyses 5-(methylsulfanyl)-alpha-D-ribose 1-phosphate = 5-(methylsulfanyl)-D-ribulose 1-phosphate. Its pathway is amino-acid biosynthesis; L-methionine biosynthesis via salvage pathway; L-methionine from S-methyl-5-thio-alpha-D-ribose 1-phosphate: step 1/6. Functionally, catalyzes the interconversion of methylthioribose-1-phosphate (MTR-1-P) into methylthioribulose-1-phosphate (MTRu-1-P). The polypeptide is Methylthioribose-1-phosphate isomerase (Heliobacterium modesticaldum (strain ATCC 51547 / Ice1)).